Here is a 427-residue protein sequence, read N- to C-terminus: Peptidase B (427 aa).

Lys-195 and Asp-200 together coordinate Mn(2+). Lys-207 is an active-site residue. Mn(2+) contacts are provided by Asp-218, Asp-277, and Glu-279. Arg-281 is an active-site residue.

Belongs to the peptidase M17 family. Homohexamer. It depends on Mn(2+) as a cofactor.

Its subcellular location is the cytoplasm. It carries out the reaction Release of an N-terminal amino acid, Xaa, from a peptide or arylamide. Xaa is preferably Glu or Asp but may be other amino acids, including Leu, Met, His, Cys and Gln.. In terms of biological role, probably plays an important role in intracellular peptide degradation. The chain is Peptidase B from Escherichia coli (strain SE11).